Reading from the N-terminus, the 339-residue chain is Methionine import ATP-binding protein MetN 1 (339 aa).

The ABC transporter domain maps to Ile2–Val241. Gly38–Ser45 serves as a coordination point for ATP.

It belongs to the ABC transporter superfamily. Methionine importer (TC 3.A.1.24) family. The complex is composed of two ATP-binding proteins (MetN), two transmembrane proteins (MetI) and a solute-binding protein (MetQ).

Its subcellular location is the cell membrane. It carries out the reaction L-methionine(out) + ATP + H2O = L-methionine(in) + ADP + phosphate + H(+). The catalysed reaction is D-methionine(out) + ATP + H2O = D-methionine(in) + ADP + phosphate + H(+). In terms of biological role, part of the ABC transporter complex MetNIQ involved in methionine import. Responsible for energy coupling to the transport system. The chain is Methionine import ATP-binding protein MetN 1 from Bacillus thuringiensis subsp. konkukian (strain 97-27).